Reading from the N-terminus, the 346-residue chain is PPE family protein PPE17 (346 aa).

The tract at residues 6–159 (FPPEFNSLNI…LYATMAAAAA (154 aa)) is PPE.

The protein belongs to the mycobacterial PPE family. Interacts with LRR motifs 15-20 of host Toll-like receptor 2 (TLR2).

It is found in the secreted. The protein resides in the cell wall. The protein localises to the cell surface. In terms of biological role, induces pro-inflammatory responses. Induces host TLR1/2 heterodimerization, which causes an increased recruitment of IRAK1, MYD88, and protein kinase C epsilon (PRKCE) to the downstream TLR-signaling complex that translocates PRKCE into the nucleus in an IRAK1-dependent manner. PRKCE-mediated phosphorylation allowed the nuclear IRAK3 to be exported to the cytoplasm, leading to increased activation of ERK1/2, stabilization of MAPK phosphatase 1 (MKP1), and induction of TNF-alpha with concomitant down-regulation of MAP kinase p38. During M.tuberculosis and HIV-1 co-infection, can stimulate transcription from the long terminal repeat (LTR) of HIV-1 in monocyte/macrophage cells. Interaction with human TLR2 activates the NF-kappa-B transcription factor, which binds to the promoter region of the HIV-1 and induces HIV-1 gene expression. In Mycobacterium tuberculosis (strain ATCC 25618 / H37Rv), this protein is PPE family protein PPE17 (PPE17).